A 436-amino-acid chain; its full sequence is Probable protein phosphatase 2C 15 (436 aa).

In terms of domain architecture, PPM-type phosphatase spans 30–302; that stretch reads KAAKMEKPIV…DDTTCIVVDI (273 aa). Residues D78, G79, D254, and D293 each contribute to the Mn(2+) site.

It belongs to the PP2C family. Mg(2+) is required as a cofactor. Mn(2+) serves as cofactor.

The catalysed reaction is O-phospho-L-seryl-[protein] + H2O = L-seryl-[protein] + phosphate. The enzyme catalyses O-phospho-L-threonyl-[protein] + H2O = L-threonyl-[protein] + phosphate. The protein is Probable protein phosphatase 2C 15 of Arabidopsis thaliana (Mouse-ear cress).